The chain runs to 338 residues: Fructose-1,6-bisphosphatase class 1 (338 aa).

Mg(2+) contacts are provided by glutamate 92, aspartate 115, leucine 117, and aspartate 118. Substrate-binding positions include 118–121 (DGSS), asparagine 211, tyrosine 244, 262–264 (YLY), and lysine 274. Position 280 (glutamate 280) interacts with Mg(2+).

Belongs to the FBPase class 1 family. Homotetramer. Mg(2+) is required as a cofactor.

The protein localises to the cytoplasm. It catalyses the reaction beta-D-fructose 1,6-bisphosphate + H2O = beta-D-fructose 6-phosphate + phosphate. Its pathway is carbohydrate biosynthesis; gluconeogenesis. This is Fructose-1,6-bisphosphatase class 1 from Vibrio vulnificus (strain YJ016).